The chain runs to 390 residues: Na(+)/H(+) antiporter NhaA (390 aa).

Transmembrane regions (helical) follow at residues 13-33 (FQLE…ALVI), 61-81 (LSVH…FVTL), 99-119 (LLPI…YVFI), 129-149 (GWAI…SLLG), 158-178 (VFLT…IAFF), 181-201 (GDLS…LLTL), 209-229 (FIPY…SGIH), 259-279 (AISP…NAGV), 297-317 (ILLG…FIAV), 330-350 (WLSL…SLFV), and 367-387 (IGVL…LLYA).

This sequence belongs to the NhaA Na(+)/H(+) (TC 2.A.33) antiporter family.

It localises to the cell inner membrane. It catalyses the reaction Na(+)(in) + 2 H(+)(out) = Na(+)(out) + 2 H(+)(in). In terms of biological role, na(+)/H(+) antiporter that extrudes sodium in exchange for external protons. The protein is Na(+)/H(+) antiporter NhaA of Pelagibacter ubique (strain HTCC1062).